Reading from the N-terminus, the 398-residue chain is MGFLKLLSTSLATLAVVNAGKLLTANDGDEVVPSSYIVVMNDGVSTAQFETHRNWAANVHARTRSLKGGESGPGKHFDINGMKGYSASFDDRTVKDIASDPTVKYVEPDMVVNATANVVQRNAPSWGLSRISSKKSGATDYVYDSTAGEGIVIYGVDTGIDIGHADFGGRAEWGTNTADNDDTDGNGHGTHTASTAAGSKFGVAKKASVVAVKVLGADGSGTNSQVIAGMDWAVKDSKSRGATGKSVMNMSLGGAYSRAMNDAAANVVRSGVFLSVAAGNEAQDASNSSPASAPNVCTIAASTNSDGSASFTNFGSVVDLYAPGKDITAAYPGGGSKTLSGTSMAAPHVAGAAAYLMALEGVTSDKACARIVELAISSISSAPSGTTSKLLYNGINAQ.

The signal sequence occupies residues 1-19; that stretch reads MGFLKLLSTSLATLAVVNA. A propeptide spans 20–115 (removed in mature form); it reads GKLLTANDGD…VEPDMVVNAT (96 aa). One can recognise an Inhibitor I9 domain in the interval 35 to 113; it reads SYIVVMNDGV…KYVEPDMVVN (79 aa). A glycan (N-linked (GlcNAc...) asparagine) is linked at Asn-113. Residues 124 to 134 are igE-binding; it reads PSWGLSRISSK. Positions 125–398 constitute a Peptidase S8 domain; that stretch reads SWGLSRISSK…KLLYNGINAQ (274 aa). The active-site Charge relay system is Asp-157. The interval 163-170 is igE-binding; it reads GHADFGGR. Positions 175 to 195 are disordered; it reads TNTADNDDTDGNGHGTHTAST. The Charge relay system role is filled by His-188. An igE-binding region spans residues 227 to 245; that stretch reads IAGMDWAVKDSKSRGATGK. An N-linked (GlcNAc...) asparagine glycan is attached at Asn-249. The igE-binding stretch occupies residues 310–318; it reads SFTNFGSVV. Ser-343 functions as the Charge relay system in the catalytic mechanism.

Belongs to the peptidase S8 family.

It is found in the secreted. Inhibited by phenylmethanesulfonyl fluoride (PMSF) and diethyl pyrocarbonate (DEPC), but not by benzamidine. Its function is as follows. Serine protease that hydrolyzes casein, gelatin and human collagen type IV, but not elastin in vitro. Hydrolyzes OCLN of the human lung epithelial cells at 202-Gln-|-Ser-203 and Gln-211-|-Ile-212. The polypeptide is Subtilisin-like serine protease EN45_076310 (Penicillium chrysogenum (Penicillium notatum)).